The following is a 520-amino-acid chain: Cholesterol side-chain cleavage enzyme, mitochondrial (520 aa).

The N-terminal 39 residues, 1–39 (MLARGLPLRSALVKACPPLLNTGREGWGHHRVGTGEGAG), are a transit peptide targeting the mitochondrion. The tract at residues 27-48 (WGHHRVGTGEGAGISTRTPRPY) is disordered. Cys-461 contributes to the heme binding site.

Belongs to the cytochrome P450 family. Interacts with FDX1/adrenodoxin. Requires heme as cofactor.

The protein resides in the mitochondrion inner membrane. It carries out the reaction 6 reduced [adrenodoxin] + cholesterol + 3 O2 + 6 H(+) = 4-methylpentanal + pregnenolone + 6 oxidized [adrenodoxin] + 4 H2O. The enzyme catalyses 2 reduced [adrenodoxin] + cholesterol + O2 + 2 H(+) = (22R)-hydroxycholesterol + 2 oxidized [adrenodoxin] + H2O. The catalysed reaction is (22R)-hydroxycholesterol + 2 reduced [adrenodoxin] + O2 + 2 H(+) = (20R,22R)-20,22-dihydroxycholesterol + 2 oxidized [adrenodoxin] + H2O. It catalyses the reaction (20R,22R)-20,22-dihydroxycholesterol + 2 reduced [adrenodoxin] + O2 + 2 H(+) = 4-methylpentanal + pregnenolone + 2 oxidized [adrenodoxin] + 2 H2O. It functions in the pathway lipid metabolism; C21-steroid hormone metabolism. Its pathway is steroid metabolism; cholesterol metabolism. In terms of biological role, a cytochrome P450 monooxygenase that catalyzes the side-chain hydroxylation and cleavage of cholesterol to pregnenolone, the precursor of most steroid hormones. Catalyzes three sequential oxidation reactions of cholesterol, namely the hydroxylation at C22 followed with the hydroxylation at C20 to yield 20R,22R-hydroxycholesterol that is further cleaved between C20 and C22 to yield the C21-steroid pregnenolone and 4-methylpentanal. Mechanistically, uses molecular oxygen inserting one oxygen atom into a substrate and reducing the second into a water molecule. Two electrons are provided by NADPH via a two-protein mitochondrial transfer system comprising flavoprotein FDXR (adrenodoxin/ferredoxin reductase) and nonheme iron-sulfur protein FDX1 or FDX2 (adrenodoxin/ferredoxin). The chain is Cholesterol side-chain cleavage enzyme, mitochondrial from Capra hircus (Goat).